The chain runs to 178 residues: MORN repeat-containing protein 5 (178 aa).

MORN repeat units lie at residues 8–30 (YDGDYNNGRMEGTGEYTIPTHTR), 31–53 (YVGEMKDGMFHGKGVLHFPNGSK), and 54–75 (YEGTWEKGICKEGKYTFSDGLK).

The protein resides in the cell projection. Its subcellular location is the cilium. It localises to the flagellum. The sequence is that of MORN repeat-containing protein 5 (morn5) from Danio rerio (Zebrafish).